Reading from the N-terminus, the 266-residue chain is Apolipoprotein A-I (266 aa).

The signal sequence occupies residues 1-18 (MKAVVLTLAVLFLTGSQA). A run of 2 repeats spans residues 67 to 88 (LKLL…EQIG) and 89 to 110 (PVTQ…QEMN). The tract at residues 67–266 (LKLLDNWDTL…DEATKKLNAQ (200 aa)) is 10 X approximate tandem repeats. Position 109 is a methionine sulfoxide (Met109). The stretch at 111 to 121 (KDLEEVKKKVQ) is one 3; half-length repeat. A run of 5 repeats spans residues 122 to 143 (PYLD…QKVA), 144 to 165 (PLGA…EKLS), 166 to 187 (PLGE…AQLA), 188 to 209 (PYSD…EGGG), and 210 to 231 (AALA…EKAK). Residues 232–242 (PALEDLRQGLL) form a 9; half-length repeat. Copy 10 of the repeat occupies 243–266 (PVLESFRTSLLAAVDEATKKLNAQ).

It belongs to the apolipoprotein A1/A4/E family. As to quaternary structure, homodimer. Interacts with APOA1BP and CLU. Component of a sperm activating protein complex (SPAP), consisting of APOA1, an immunoglobulin heavy chain, an immunoglobulin light chain and albumin. Interacts with NDRG1. Interacts with SCGB3A2. Interacts with NAXE and YJEFN3. Post-translationally, glycosylated. In terms of processing, palmitoylated. Phosphorylation sites are present in the extracellular medium.

Its subcellular location is the secreted. Functionally, participates in the reverse transport of cholesterol from tissues to the liver for excretion by promoting cholesterol efflux from tissues and by acting as a cofactor for the lecithin cholesterol acyltransferase (LCAT). As part of the SPAP complex, activates spermatozoa motility. The polypeptide is Apolipoprotein A-I (APOA1) (Odobenus rosmarus divergens (Pacific walrus)).